Reading from the N-terminus, the 430-residue chain is UDP-N-acetylglucosamine 1-carboxyvinyltransferase 1 (430 aa).

22-23 contacts phosphoenolpyruvate; sequence KN. Residue Arg93 participates in UDP-N-acetyl-alpha-D-glucosamine binding. Cys117 acts as the Proton donor in catalysis. Cys117 bears the 2-(S-cysteinyl)pyruvic acid O-phosphothioketal mark. UDP-N-acetyl-alpha-D-glucosamine-binding positions include 122 to 126, Asp305, and Val327; that span reads RPVDL.

The protein belongs to the EPSP synthase family. MurA subfamily.

It is found in the cytoplasm. The catalysed reaction is phosphoenolpyruvate + UDP-N-acetyl-alpha-D-glucosamine = UDP-N-acetyl-3-O-(1-carboxyvinyl)-alpha-D-glucosamine + phosphate. Its pathway is cell wall biogenesis; peptidoglycan biosynthesis. Functionally, cell wall formation. Adds enolpyruvyl to UDP-N-acetylglucosamine. This chain is UDP-N-acetylglucosamine 1-carboxyvinyltransferase 1, found in Listeria monocytogenes serovar 1/2a (strain ATCC BAA-679 / EGD-e).